We begin with the raw amino-acid sequence, 304 residues long: Porphobilinogen deaminase (304 aa).

Position 241 is an S-(dipyrrolylmethanemethyl)cysteine (cysteine 241).

This sequence belongs to the HMBS family. Monomer. Dipyrromethane serves as cofactor.

The catalysed reaction is 4 porphobilinogen + H2O = hydroxymethylbilane + 4 NH4(+). It functions in the pathway porphyrin-containing compound metabolism; protoporphyrin-IX biosynthesis; coproporphyrinogen-III from 5-aminolevulinate: step 2/4. Its function is as follows. Tetrapolymerization of the monopyrrole PBG into the hydroxymethylbilane pre-uroporphyrinogen in several discrete steps. This Vesicomyosocius okutanii subsp. Calyptogena okutanii (strain HA) protein is Porphobilinogen deaminase.